A 932-amino-acid chain; its full sequence is 2-oxoglutarate dehydrogenase E1 component (932 aa).

This sequence belongs to the alpha-ketoglutarate dehydrogenase family. As to quaternary structure, homodimer. Part of the 2-oxoglutarate dehydrogenase (OGDH) complex composed of E1 (2-oxoglutarate dehydrogenase), E2 (dihydrolipoamide succinyltransferase) and E3 (dihydrolipoamide dehydrogenase); the complex contains multiple copies of the three enzymatic components (E1, E2 and E3). It depends on thiamine diphosphate as a cofactor.

The enzyme catalyses N(6)-[(R)-lipoyl]-L-lysyl-[protein] + 2-oxoglutarate + H(+) = N(6)-[(R)-S(8)-succinyldihydrolipoyl]-L-lysyl-[protein] + CO2. Functionally, E1 component of the 2-oxoglutarate dehydrogenase (OGDH) complex which catalyzes the decarboxylation of 2-oxoglutarate, the first step in the conversion of 2-oxoglutarate to succinyl-CoA and CO(2). This Staphylococcus aureus (strain MW2) protein is 2-oxoglutarate dehydrogenase E1 component.